The following is a 119-amino-acid chain: Large ribosomal subunit protein uL18 (119 aa).

This sequence belongs to the universal ribosomal protein uL18 family. Part of the 50S ribosomal subunit; part of the 5S rRNA/L5/L18/L25 subcomplex. Contacts the 5S and 23S rRNAs.

Functionally, this is one of the proteins that bind and probably mediate the attachment of the 5S RNA into the large ribosomal subunit, where it forms part of the central protuberance. The polypeptide is Large ribosomal subunit protein uL18 (Cereibacter sphaeroides (strain ATCC 17029 / ATH 2.4.9) (Rhodobacter sphaeroides)).